The sequence spans 190 residues: NADH-quinone oxidoreductase subunit B (190 aa).

[4Fe-4S] cluster-binding residues include C39, C40, C104, and C135.

It belongs to the complex I 20 kDa subunit family. In terms of assembly, NDH-1 is composed of 14 different subunits. Subunits NuoB, C, D, E, F, and G constitute the peripheral sector of the complex. [4Fe-4S] cluster is required as a cofactor.

The protein localises to the cell inner membrane. The enzyme catalyses a quinone + NADH + 5 H(+)(in) = a quinol + NAD(+) + 4 H(+)(out). In terms of biological role, NDH-1 shuttles electrons from NADH, via FMN and iron-sulfur (Fe-S) centers, to quinones in the respiratory chain. The immediate electron acceptor for the enzyme in this species is believed to be a menaquinone. Couples the redox reaction to proton translocation (for every two electrons transferred, four hydrogen ions are translocated across the cytoplasmic membrane), and thus conserves the redox energy in a proton gradient. This Chlorobium chlorochromatii (strain CaD3) protein is NADH-quinone oxidoreductase subunit B.